Consider the following 816-residue polypeptide: Phosphatidylinositol 4-kinase beta (816 aa).

3 disordered regions span residues 1-28, 93-120, and 249-318; these read MGDT…NGGS, PPTG…RRRR, and HRKR…SFSS. Gly-2 carries the N-acetylglycine modification. The segment at 2-68 is interaction with ACBD3; sequence GDTVVAPAPL…VKLSHGGVAS (67 aa). The region spanning 49 to 242 is the PIK helical domain; sequence QKACQEVLQK…GTKLRRLILS (194 aa). Ser-258 bears the Phosphoserine mark. Thr-263 carries the phosphothreonine modification. Ser-266, Ser-275, Ser-277, Ser-284, Ser-294, Ser-428, and Ser-511 each carry phosphoserine. Over residues 278-294 the composition is skewed to low complexity; the sequence is DATASISLSSSLKRTAS. Phosphothreonine is present on residues Thr-517 and Thr-519. The region spanning 535 to 801 is the PI3K/PI4K catalytic domain; the sequence is EPWQEKVRRI…MVDGSMRSIT (267 aa). The tract at residues 541 to 547 is G-loop; that stretch reads VRRIREG. Positions 668–676 are catalytic loop; that stretch reads QVKDRHNGN. An activation loop region spans residues 687–711; sequence HIDFGFILSSSPRNLGFETSAFKLT.

It belongs to the PI3/PI4-kinase family. Type III PI4K subfamily. In terms of assembly, interacts with ARF1 and ARF3 in the Golgi complex, but not with ARF4, ARF5 or ARF6. Interacts with NCS1/FREQ in a calcium-independent manner. Interacts with CALN1/CABP8 and CALN2/CABP7; in a calcium-dependent manner; this interaction competes with NCS1/FREQ binding. Interacts with ACBD3. Interacts with ARMH3, YWHAB, YWHAE, YWHAG, YWHAH, YWHAQ, YWHAZ and SFN. Interacts with GGA2 (via VHS domain); the interaction is important for PI4KB location at the Golgi apparatus membrane. Interacts with ATG9A. Mg(2+) is required as a cofactor. Requires Mn(2+) as cofactor.

It localises to the endomembrane system. The protein localises to the mitochondrion outer membrane. It is found in the rough endoplasmic reticulum membrane. The protein resides in the golgi apparatus. Its subcellular location is the golgi apparatus membrane. The catalysed reaction is a 1,2-diacyl-sn-glycero-3-phospho-(1D-myo-inositol) + ATP = a 1,2-diacyl-sn-glycero-3-phospho-(1D-myo-inositol 4-phosphate) + ADP + H(+). With respect to regulation, inhibited by wortmannin. Increased kinase activity upon interaction with NCS1/FREQ. Functionally, phosphorylates phosphatidylinositol (PI) in the first committed step in the production of the second messenger inositol-1,4,5,-trisphosphate (PIP). May regulate Golgi disintegration/reorganization during mitosis, possibly via its phosphorylation. Involved in Golgi-to-plasma membrane trafficking. May play an important role in the inner ear development. This is Phosphatidylinositol 4-kinase beta (PI4KB) from Rhinolophus ferrumequinum (Greater horseshoe bat).